A 264-amino-acid chain; its full sequence is Sororin (264 aa).

The disordered stretch occupies residues 1 to 45 (MAERRTRSGGAAQRSGPRTSLTKPSKSSKRKSGSDLPNSFSEIWP). A phosphoserine mark is found at Ser20, Ser32, Ser34, Ser78, and Ser82. The KEN box signature appears at 87–89 (KEN). At Thr97 the chain carries Phosphothreonine. Ser106 is modified (phosphoserine). Phosphothreonine is present on residues Thr110, Thr114, and Thr159. The FGF motif motif lies at 166–168 (FGF). At Ser222 the chain carries Phosphoserine. The tract at residues 242–264 (LDKWAVAMNAEFEAAEQFELLIE) is C-terminal Sororin domain.

This sequence belongs to the sororin family. As to quaternary structure, interacts with the APC/C complex. Interacts with the chromatin-bound cohesin complex; the interaction is indirect, occurs after DNA replication and requires acetylation of the cohesin component SMC3. Interacts (via the FGF motif) with PDS5A and PDS5B; the interaction is direct and prevents the interaction of PDS5A with WAPL. Post-translationally, phosphorylated. Phosphorylation, as cells enter mitosis, disrupts the interaction with PDS5A and relieves the inhibition of WAPL by CDCA5. In terms of processing, ubiquitinated by the APC/C complex in G1, leading to its degradation.

The protein resides in the nucleus. The protein localises to the chromosome. It is found in the cytoplasm. Its function is as follows. Regulator of sister chromatid cohesion in mitosis stabilizing cohesin complex association with chromatin. May antagonize the action of WAPL which stimulates cohesin dissociation from chromatin. Cohesion ensures that chromosome partitioning is accurate in both meiotic and mitotic cells and plays an important role in DNA repair. Required for efficient DNA double-stranded break repair. The sequence is that of Sororin (Cdca5) from Mus musculus (Mouse).